Here is a 568-residue protein sequence, read N- to C-terminus: MTLRLSRRAYAEMFGPTTGDRVRLADTELLIEIERDYTIYGEEVKFGGGKVIRDGMGQSQRVAADVPDTIITNAVILDHWGIVKADIAIKHGRIAAIGKAGNPDIQPGVTIAIGAATEVIAGEGLIVTAGGIDTHIHFISPQQIDEALASGVTTMLGGGTGPATGTNATTCTPGPWHMERMLQAADGWPINLGFLGKGNVSVPQPLVEQIAAGAIGLKLHEDWGTTPAAIDNCLSVADDTDTQVAIHTDTLNEGGFVESTVAAFKGRTIHTYHTEGAGGGHAPDILKVCGESNVLPSSTNPTRPYTINTLDEHLDMLMVCHHLDPSIAEDLAFAESRIRRETIAAEDILHDLGALSMLSSDSQAMGRVGEVIIRTWQTAHKMKVQRGALPEDNARNDNFRAKRYVAKYTINPAITHGIAHEVGSIEPGKWADLVLWEPAFFGIKPSMILKGGMIAMAQMGDPNASIPTPQPVHYREMFATRGGALARTSLTFVSQMAADAGIAERYGLAKWIVPVRNCRNVTKADMIHNAWRPSISVDPETYDVIADGQLLTCEPATVLPMAQRYFLF.

Residues 130 to 568 (GGIDTHIHFI…LPMAQRYFLF (439 aa)) enclose the Urease domain. The Ni(2+) site is built by His135, His137, and Lys218. Lys218 bears the N6-carboxylysine mark. His220 provides a ligand contact to substrate. 2 residues coordinate Ni(2+): His247 and His273. The active-site Proton donor is the His321. Residue Asp361 coordinates Ni(2+).

Belongs to the metallo-dependent hydrolases superfamily. Urease alpha subunit family. Heterotrimer of UreA (gamma), UreB (beta) and UreC (alpha) subunits. Three heterotrimers associate to form the active enzyme. It depends on Ni cation as a cofactor. In terms of processing, carboxylation allows a single lysine to coordinate two nickel ions.

Its subcellular location is the cytoplasm. It carries out the reaction urea + 2 H2O + H(+) = hydrogencarbonate + 2 NH4(+). It participates in nitrogen metabolism; urea degradation; CO(2) and NH(3) from urea (urease route): step 1/1. The sequence is that of Urease subunit alpha from Burkholderia vietnamiensis (strain G4 / LMG 22486) (Burkholderia cepacia (strain R1808)).